The primary structure comprises 504 residues: Zinc finger CCCH-type with G patch domain-containing protein (504 aa).

A disordered region spans residues 95–121; the sequence is LSEDSNEVKPNPDTDEENEEEEQDISG. The span at 107 to 118 shows a compositional bias: acidic residues; that stretch reads DTDEENEEEEQD. The segment at 165–191 adopts a C3H1-type zinc-finger fold; that stretch reads KSMKPCGFYLEGKCRFMDNCRYSHGEV. A G-patch domain is found at 308 to 354; it reads TRGIGSKLLMKMGYELGKGLGKTLSGRVEPVQAVVLPKGHSLDICAE.

Its subcellular location is the nucleus. Transcription repressor that specifically binds the 5'-GGAG[GA]A[GA]A-3' consensus sequence. Represses transcription by recruiting the chromatin multiprotein complex NuRD to target promoters. Negatively regulates expression of EGFR, a gene involved in cell proliferation, survival and migration. The chain is Zinc finger CCCH-type with G patch domain-containing protein (zgpat) from Danio rerio (Zebrafish).